Consider the following 478-residue polypeptide: Proline--tRNA ligase (478 aa).

This sequence belongs to the class-II aminoacyl-tRNA synthetase family. ProS type 3 subfamily. As to quaternary structure, homodimer.

Its subcellular location is the cytoplasm. The enzyme catalyses tRNA(Pro) + L-proline + ATP = L-prolyl-tRNA(Pro) + AMP + diphosphate. Functionally, catalyzes the attachment of proline to tRNA(Pro) in a two-step reaction: proline is first activated by ATP to form Pro-AMP and then transferred to the acceptor end of tRNA(Pro). This chain is Proline--tRNA ligase, found in Clostridium novyi (strain NT).